We begin with the raw amino-acid sequence, 115 residues long: DNA-directed RNA polymerase subunit omega (115 aa).

It belongs to the RNA polymerase subunit omega family. As to quaternary structure, the RNAP catalytic core consists of 2 alpha, 1 beta, 1 beta' and 1 omega subunit. When a sigma factor is associated with the core the holoenzyme is formed, which can initiate transcription.

The catalysed reaction is RNA(n) + a ribonucleoside 5'-triphosphate = RNA(n+1) + diphosphate. In terms of biological role, promotes RNA polymerase assembly. Latches the N- and C-terminal regions of the beta' subunit thereby facilitating its interaction with the beta and alpha subunits. This chain is DNA-directed RNA polymerase subunit omega, found in Cutibacterium acnes (strain DSM 16379 / KPA171202) (Propionibacterium acnes).